Reading from the N-terminus, the 25-residue chain is Pancreatic triacylglycerol lipase (25 aa).

Cysteines 4 and 10 form a disulfide.

It belongs to the AB hydrolase superfamily. Lipase family. Forms a 1:1 stoichiometric complex with (pro)colipase/CLPS.

It localises to the secreted. It catalyses the reaction a triacylglycerol + H2O = a diacylglycerol + a fatty acid + H(+). It carries out the reaction 1,2,3-tributanoylglycerol + H2O = dibutanoylglycerol + butanoate + H(+). The catalysed reaction is 1,2,3-tri-(9Z-octadecenoyl)-glycerol + H2O = di-(9Z)-octadecenoylglycerol + (9Z)-octadecenoate + H(+). The enzyme catalyses all-trans-retinyl hexadecanoate + H2O = all-trans-retinol + hexadecanoate + H(+). It catalyses the reaction 1,2-di-(9Z-octadecenoyl)-glycerol + H2O = (9Z-octadecenoyl)-glycerol + (9Z)-octadecenoate + H(+). Inhibited by bile salts, is reactivated by (pro)colipase/CLPS. Its function is as follows. Plays an important role in fat metabolism. It preferentially splits the esters of long-chain fatty acids at positions 1 and 3, producing mainly 2-monoacylglycerol and free fatty acids, and shows considerably higher activity against insoluble emulsified substrates than against soluble ones. In Felis catus (Cat), this protein is Pancreatic triacylglycerol lipase (PNLIP).